A 220-amino-acid chain; its full sequence is Probable GTP-binding protein EngB (220 aa).

One can recognise an EngB-type G domain in the interval 23-199; sequence SVREVAFAGR…ERVLASWLDI (177 aa). 2 residues coordinate Mg(2+): S38 and T60.

The protein belongs to the TRAFAC class TrmE-Era-EngA-EngB-Septin-like GTPase superfamily. EngB GTPase family. Mg(2+) serves as cofactor.

Its function is as follows. Necessary for normal cell division and for the maintenance of normal septation. The chain is Probable GTP-binding protein EngB from Dechloromonas aromatica (strain RCB).